A 499-amino-acid chain; its full sequence is NADH-quinone oxidoreductase subunit 14 (499 aa).

The next 14 helical transmembrane spans lie at Ile-9–Leu-29, Thr-37–Asn-57, Phe-76–Met-96, Phe-104–Gly-124, Leu-126–Met-146, Phe-161–Phe-181, Ala-196–Phe-216, Pro-235–Ala-255, Trp-269–Ile-289, Ser-301–Val-321, Met-324–Ser-344, Ala-369–Phe-389, Gly-402–Leu-422, and Tyr-446–Val-466.

The protein belongs to the complex I subunit 2 family. In terms of assembly, NDH-1 is composed of at least 14 different subunits, Nqo1 to Nqo14. The complex has a L-shaped structure, with the hydrophobic arm (subunits Nqo7, Nqo8, Nqo10 to Nqo14) embedded in the inner membrane and the hydrophilic peripheral arm (subunits Nqo1 to Nqo6, Nqo9) protruding into the bacterial cytoplasm. The hydrophilic domain contains all the redox centers.

The protein resides in the cell inner membrane. It carries out the reaction a quinone + NADH + 5 H(+)(in) = a quinol + NAD(+) + 4 H(+)(out). In terms of biological role, NDH-1 shuttles electrons from NADH, via FMN and iron-sulfur (Fe-S) centers, to quinones in the respiratory chain. The immediate electron acceptor for the enzyme in this species is believed to be ubiquinone. Couples the redox reaction to proton translocation (for every two electrons transferred, four hydrogen ions are translocated across the cytoplasmic membrane), and thus conserves the redox energy in a proton gradient. This chain is NADH-quinone oxidoreductase subunit 14, found in Paracoccus denitrificans.